The following is a 350-amino-acid chain: Protein RecA (350 aa).

Position 66 to 73 (66 to 73 (GPESSGKT)) interacts with ATP.

The protein belongs to the RecA family.

The protein resides in the cytoplasm. Its function is as follows. Can catalyze the hydrolysis of ATP in the presence of single-stranded DNA, the ATP-dependent uptake of single-stranded DNA by duplex DNA, and the ATP-dependent hybridization of homologous single-stranded DNAs. It interacts with LexA causing its activation and leading to its autocatalytic cleavage. The chain is Protein RecA from Dichelobacter nodosus (strain VCS1703A).